A 174-amino-acid chain; its full sequence is Protein VdlD (174 aa).

A HotDog ACOT-type domain is found at 20-132 (DRTKLLMSYL…YFTMVAVENG (113 aa)).

This sequence belongs to the acyl coenzyme A hydrolase family.

The sequence is that of Protein VdlD (vdlD) from Helicobacter pylori (strain J99 / ATCC 700824) (Campylobacter pylori J99).